The following is a 977-amino-acid chain: Ephrin type-A receptor 2 (977 aa).

Residues 1-25 form the signal peptide; it reads MELRAVGFCLALLWGCALAAAAAQG. The segment at 1-205 is mediates interaction with CLDN4; that stretch reads MELRAVGFCL…YYKKCPEMLQ (205 aa). Topologically, residues 26-538 are extracellular; sequence KEVVLLDFAA…STEGSANMAV (513 aa). The 179-residue stretch at 27–205 folds into the Eph LBD domain; the sequence is EVVLLDFAAM…YYKKCPEMLQ (179 aa). 2 cysteine pairs are disulfide-bonded: Cys69–Cys187 and Cys104–Cys114. A Fibronectin type-III 1 domain is found at 329 to 433; that stretch reads PPSAPNYLTA…TSRSFRTASV (105 aa). Asn408 and Asn436 each carry an N-linked (GlcNAc...) asparagine glycan. Positions 439–530 constitute a Fibronectin type-III 2 domain; that stretch reads EPPKVRLEDR…KVHEFQTLST (92 aa). A helical transmembrane segment spans residues 539-559; the sequence is IGGVAVGVVLLLVLAGVGLFI. The Cytoplasmic segment spans residues 560–977; it reads HRRRRNLRAR…DQVNTVGIPI (418 aa). 2 positions are modified to phosphoserine: Ser571 and Ser580. Tyr589 and Tyr595 each carry phosphotyrosine; by autocatalysis. Positions 607-907 are mediates interaction with ARHGEF16; the sequence is TEIHPSCVAR…STSGSEGVPF (301 aa). The Protein kinase domain occupies 614 to 876; sequence VARQKVIGAG…DIVSILDKLI (263 aa). 620-628 serves as a coordination point for ATP; that stretch reads IGAGEFGEV. Tyr629 is modified (phosphotyrosine). Lys647 contributes to the ATP binding site. Thr648 carries the phosphothreonine modification. Tyr736 bears the Phosphotyrosine; by autocatalysis mark. The active-site Proton acceptor is Asp740. Tyr773 is subject to Phosphotyrosine; by autocatalysis. Residues Ser870, Ser893, Ser898, and Ser902 each carry the phosphoserine modification. The interval 887-977 is negatively regulates interaction with ARHGEF16; the sequence is DFDPRVSIRL…DQVNTVGIPI (91 aa). The SAM domain occupies 905-969; the sequence is VPFRTVSEWL…AYSLLGLKDQ (65 aa). Residue Tyr922 is modified to Phosphotyrosine; by autocatalysis. Phosphotyrosine is present on Tyr931. The PDZ-binding signature appears at 975–977; the sequence is IPI.

Belongs to the protein kinase superfamily. Tyr protein kinase family. Ephrin receptor subfamily. As to quaternary structure, homodimer. Interacts with INPPL1; regulates activated EPHA2 endocytosis and degradation. Interacts (inactivated form) with PTK2/FAK1 and interacts (EFNA1 ligand-activated form) with PTPN11; regulates integrin-mediated adhesion. Interacts with ARHGEF16, DOCK4 and ELMO2; mediates ligand-independent activation of RAC1 which stimulates cell migration. Interacts with CLDN4; phosphorylates CLDN4 and may regulate tight junctions. Interacts with ACP1. Interacts with CEMIP. Interacts with NCK1; may regulate EPHA2 activity in cell migration and adhesion. Interacts with SLA. Interacts (phosphorylated form) with VAV2, VAV3 and PI3-kinase p85 subunit (PIK3R1, PIK3R2 or PIK3R3); critical for the EFNA1-induced activation of RAC1 which stimulates cell migration. Interacts with ANKS1A. Interacts with TIMD4. Autophosphorylates. Phosphorylated at Ser-898 by PKB; serum-induced phosphorylation which targets EPHA2 to the cell leading edge and stimulates cell migration. Phosphorylation by PKB is inhibited by EFNA1-activated EPHA2 which regulates PKB activity via a reciprocal regulatory loop. Phosphorylated on tyrosine upon binding and activation by EFNA1. Phosphorylated residues Tyr-589 and Tyr-595 are required for binding VAV2 and VAV3 while phosphorylated residues Tyr-736 and Tyr-931 are required for binding PI3-kinase p85 subunit (PIK3R1, PIK3R2 or PIK3R3). These phosphorylated residues are critical for recruitment of VAV2 and VAV3 and PI3-kinase p85 subunit which transduce downstream signaling to activate RAC1 GTPase and cell migration. Dephosphorylation of Tyr-931 by PTPRF prevents the interaction of EPHA2 with NCK1. Phosphorylated at Ser-898 in response to TNF by RPS6KA1 and RPS6KA3; RPS6KA-EPHA2 signaling pathway controls cell migration. Phosphorylated at Ser-898 by PKA; blocks cell retraction induced by EPHA2 kinase activity. Dephosphorylated by ACP1. In terms of processing, ubiquitinated by CHIP/STUB1. Ubiquitination is regulated by the HSP90 chaperone and regulates the receptor stability and activity through proteasomal degradation. ANKS1A prevents ubiquitination and degradation. As to expression, expressed in the lung, intestine and liver. Expressed in myogenic progenitor cells.

The protein resides in the cell membrane. The protein localises to the cell projection. Its subcellular location is the ruffle membrane. It is found in the lamellipodium membrane. It localises to the cell junction. The protein resides in the focal adhesion. It carries out the reaction L-tyrosyl-[protein] + ATP = O-phospho-L-tyrosyl-[protein] + ADP + H(+). Receptor tyrosine kinase which binds promiscuously membrane-bound ephrin-A family ligands residing on adjacent cells, leading to contact-dependent bidirectional signaling into neighboring cells. The signaling pathway downstream of the receptor is referred to as forward signaling while the signaling pathway downstream of the ephrin ligand is referred to as reverse signaling. Activated by the ligand ephrin-A1/EFNA1 regulates migration, integrin-mediated adhesion, proliferation and differentiation of cells. Regulates cell adhesion and differentiation through DSG1/desmoglein-1 and inhibition of the ERK1/ERK2 signaling pathway. May also participate in UV radiation-induced apoptosis and have a ligand-independent stimulatory effect on chemotactic cell migration. During development, may function in distinctive aspects of pattern formation and subsequently in development of several fetal tissues. Involved for instance in angiogenesis, in early hindbrain development and epithelial proliferation and branching morphogenesis during mammary gland development. Engaged by the ligand ephrin-A5/EFNA5 may regulate lens fiber cells shape and interactions and be important for lens transparency development and maintenance. With ephrin-A2/EFNA2 may play a role in bone remodeling through regulation of osteoclastogenesis and osteoblastogenesis. This Mus musculus (Mouse) protein is Ephrin type-A receptor 2 (Epha2).